Reading from the N-terminus, the 143-residue chain is Spore coat protein P (143 aa).

The sHSP domain occupies 34–143 (FFDSEASTFV…VETVAFNKGL (110 aa)).

It belongs to the small heat shock protein (HSP20) family.

This Bacillus subtilis (strain 168) protein is Spore coat protein P (cotP).